Here is a 786-residue protein sequence, read N- to C-terminus: Protein translocase subunit SecA 1 (786 aa).

Residues Q85, 103–107 (GEGKT), and D491 each bind ATP.

This sequence belongs to the SecA family. Monomer and homodimer. Part of the essential Sec protein translocation apparatus which comprises SecA, SecYEG and auxiliary proteins SecDF. Other proteins may also be involved.

It localises to the cell membrane. It is found in the cytoplasm. The catalysed reaction is ATP + H2O + cellular proteinSide 1 = ADP + phosphate + cellular proteinSide 2.. Its function is as follows. Part of the Sec protein translocase complex. Interacts with the SecYEG preprotein conducting channel. Has a central role in coupling the hydrolysis of ATP to the transfer of proteins into and across the cell membrane, serving as an ATP-driven molecular motor driving the stepwise translocation of polypeptide chains across the membrane. In Pediococcus pentosaceus (strain ATCC 25745 / CCUG 21536 / LMG 10740 / 183-1w), this protein is Protein translocase subunit SecA 1.